Consider the following 404-residue polypeptide: Cysteine desulfurase IscS (404 aa).

Pyridoxal 5'-phosphate is bound by residues 75-76, N155, Q183, and 203-205; these read AT and SAH. K206 is modified (N6-(pyridoxal phosphate)lysine). T243 contacts pyridoxal 5'-phosphate. C328 acts as the Cysteine persulfide intermediate in catalysis. C328 serves as a coordination point for [2Fe-2S] cluster.

Belongs to the class-V pyridoxal-phosphate-dependent aminotransferase family. NifS/IscS subfamily. Homodimer. Forms a heterotetramer with IscU, interacts with other sulfur acceptors. The cofactor is pyridoxal 5'-phosphate.

It is found in the cytoplasm. The enzyme catalyses (sulfur carrier)-H + L-cysteine = (sulfur carrier)-SH + L-alanine. It participates in cofactor biosynthesis; iron-sulfur cluster biosynthesis. In terms of biological role, master enzyme that delivers sulfur to a number of partners involved in Fe-S cluster assembly, tRNA modification or cofactor biosynthesis. Catalyzes the removal of elemental sulfur atoms from cysteine to produce alanine. Functions as a sulfur delivery protein for Fe-S cluster synthesis onto IscU, an Fe-S scaffold assembly protein, as well as other S acceptor proteins. The chain is Cysteine desulfurase IscS from Shewanella woodyi (strain ATCC 51908 / MS32).